Reading from the N-terminus, the 375-residue chain is Acyl-coenzyme A diphosphatase NUDT19 (375 aa).

The region spanning 15–263 (AASIVLAAGW…IWLPPPQFYE (249 aa)) is the Nudix hydrolase domain. Residues 91–116 (LGPAPFSRTAFPSLPDTDDHKTDNTG) form a disordered region. The Nudix box motif lies at 116–137 (GTLPEDVAFRICAVREAFEEAG). Mg(2+) contacts are provided by Glu-131 and Glu-135. Residues 373–375 (SHL) carry the Microbody targeting signal motif.

Belongs to the Nudix hydrolase family. In terms of assembly, monomer. The cofactor is Mg(2+). Mn(2+) serves as cofactor.

The protein resides in the peroxisome. It carries out the reaction an acyl-CoA + H2O = an acyl-4'-phosphopantetheine + adenosine 3',5'-bisphosphate + 2 H(+). The enzyme catalyses CoA + H2O = (R)-4'-phosphopantetheine + adenosine 3',5'-bisphosphate + 2 H(+). It catalyses the reaction hexanoyl-CoA + H2O = hexanoyl-4'-phosphopantetheine + adenosine 3',5'-bisphosphate + 2 H(+). The catalysed reaction is octanoyl-CoA + H2O = S-octanoyl-4'-phosphopantetheine + adenosine 3',5'-bisphosphate + 2 H(+). It carries out the reaction butanoyl-CoA + H2O = S-butanoyl-4'-phosphopantetheine + adenosine 3',5'-bisphosphate + 2 H(+). The enzyme catalyses propanoyl-CoA + H2O = propanoyl-4'-phosphopantetheine + adenosine 3',5'-bisphosphate + 2 H(+). It catalyses the reaction malonyl-CoA + H2O = malonyl-4'-phosphopantetheine + adenosine 3',5'-bisphosphate + 2 H(+). The catalysed reaction is succinyl-CoA + H2O = succinyl-4'-phosphopantetheine + adenosine 3',5'-bisphosphate + 2 H(+). It carries out the reaction choloyl-CoA + H2O = S-choloyl-4'-phosphopantetheine + adenosine 3',5'-bisphosphate + 2 H(+). The enzyme catalyses 4,8-dimethylnonanoyl-CoA + H2O = S-(4,8-dimethylnonanoyl)-4'-phosphopantetheine + adenosine 3',5'-bisphosphate + 2 H(+). It catalyses the reaction (9Z,12Z,15Z)-octadecatrienoyl-CoA + H2O = S-(9Z,12Z,15Z-octadecatrienoyl)-4'-phosphopantetheine + adenosine 3',5'-bisphosphate + 2 H(+). The catalysed reaction is (9Z,12Z)-octadecadienoyl-CoA + H2O = S-(9Z,12Z-octadecadienoyl)-4'-phosphopantetheine + adenosine 3',5'-bisphosphate + 2 H(+). It carries out the reaction (9Z)-hexadecenoyl-CoA + H2O = S-(9Z-hexadecenoyl)-4'-phosphopantetheine + adenosine 3',5'-bisphosphate + 2 H(+). The enzyme catalyses (9Z)-tetradecenoyl-CoA + H2O = S-(9Z-tetradecenoyl)-4'-phosphopantetheine + adenosine 3',5'-bisphosphate + 2 H(+). It catalyses the reaction (6Z)-octenoyl-CoA + H2O = S-(6Z-octenoyl)-4'-phosphopantetheine + adenosine 3',5'-bisphosphate + 2 H(+). The catalysed reaction is hexadecanoyl-CoA + H2O = S-hexadecanoyl-4'-phosphopantetheine + adenosine 3',5'-bisphosphate + 2 H(+). It carries out the reaction tetradecanoyl-CoA + H2O = tetradecanoyl-4'-phosphopantetheine + adenosine 3',5'-bisphosphate + 2 H(+). The enzyme catalyses dodecanoyl-CoA + H2O = S-dodecanoyl-4'-phosphopantetheine + adenosine 3',5'-bisphosphate + 2 H(+). It catalyses the reaction a 5'-end CoA-ribonucleoside in mRNA + H2O = a 5'-end phospho-adenosine-phospho-ribonucleoside in mRNA + (R)-4'-phosphopantetheine + 2 H(+). Fatty acyl-coenzyme A (CoA) diphosphatase that hydrolyzes fatty acyl-CoA to yield acyl-4'-phosphopantetheine and adenosine 3',5'-bisphosphate. Mediates the hydrolysis of a wide range of CoA esters, including choloyl-CoA and branched-chain fatty-acyl-CoA esters and at low substrate concentrations medium and long-chain fatty-acyl-CoA esters are the primary substrates. Highest activity seen with medium-chain acyl-CoA esters and higher rates of activity seen with the unsaturated acyl-CoA esters compared with the saturated esters. Exhibits decapping activity towards dpCoA-capped RNAs in vitro. In Homo sapiens (Human), this protein is Acyl-coenzyme A diphosphatase NUDT19 (NUDT19).